The sequence spans 1238 residues: Protein translocase subunit SecA 1 (1238 aa).

ATP-binding positions include Gln-107, Gly-125–Thr-129, and Asp-570. Residues Ala-1194–Pro-1220 are disordered. Over residues Gly-1199–Ile-1215 the composition is skewed to basic and acidic residues. Zn(2+) contacts are provided by Cys-1221, Cys-1223, Cys-1232, and Cys-1233.

It belongs to the SecA family. As to quaternary structure, monomer and homodimer. Part of the essential Sec protein translocation apparatus which comprises SecA, SecYEG and auxiliary proteins SecDF. Other proteins may also be involved. Zn(2+) is required as a cofactor.

It is found in the cell inner membrane. The protein localises to the cytoplasm. The catalysed reaction is ATP + H2O + cellular proteinSide 1 = ADP + phosphate + cellular proteinSide 2.. Part of the Sec protein translocase complex. Interacts with the SecYEG preprotein conducting channel. Has a central role in coupling the hydrolysis of ATP to the transfer of proteins into and across the cell membrane, serving as an ATP-driven molecular motor driving the stepwise translocation of polypeptide chains across the membrane. The sequence is that of Protein translocase subunit SecA 1 from Rhodopirellula baltica (strain DSM 10527 / NCIMB 13988 / SH1).